We begin with the raw amino-acid sequence, 379 residues long: 2-dehydropantoate 2-reductase (379 aa).

Residues 13-18 (GLGAMG) and Asn-119 each bind NADP(+). Asn-119 is a substrate binding site. The Proton donor role is filled by Lys-224. Residues Asn-228, Asn-232, and Ser-316 each coordinate substrate. Glu-328 provides a ligand contact to NADP(+).

This sequence belongs to the ketopantoate reductase family.

The enzyme catalyses (R)-pantoate + NADP(+) = 2-dehydropantoate + NADPH + H(+). Its pathway is cofactor biosynthesis; (R)-pantothenate biosynthesis; (R)-pantoate from 3-methyl-2-oxobutanoate: step 2/2. Catalyzes the NADPH-dependent reduction of ketopantoate into pantoic acid. This is 2-dehydropantoate 2-reductase (PAN5) from Saccharomyces cerevisiae (strain ATCC 204508 / S288c) (Baker's yeast).